Reading from the N-terminus, the 347-residue chain is uncharacterized protein (347 aa).

This is an uncharacterized protein from Mycoplasma genitalium (strain ATCC 33530 / DSM 19775 / NCTC 10195 / G37) (Mycoplasmoides genitalium).